We begin with the raw amino-acid sequence, 507 residues long: Nuclear distribution protein PAC1 (507 aa).

Positions 72–98 (STVLRLQRKIMDLTDEVSNLKTIIEAK) form a coiled coil. WD repeat units lie at residues 125 to 164 (QTHQ…PSIP), 170 to 222 (AHSR…QIRI), 225 to 265 (GHDH…CTRT), 268 to 312 (GHSD…GLCL), 315 to 389 (GHSH…VRPN), 410 to 449 (GHQS…TGGR), and 474 to 507 (PKDT…RLWS).

Belongs to the WD repeat LIS1/nudF family. In terms of assembly, self-associates. Interacts with NDL1 and dynein.

It is found in the cytoplasm. It localises to the cytoskeleton. Its subcellular location is the spindle pole. Its function is as follows. Positively regulates the activity of the minus-end directed microtubule motor protein dynein. Plays a central role in positioning the mitotic spindle at the bud neck during cell division. Targets cytoplasmic dynein to microtubule plus ends, thereby promoting dynein-mediated microtubule sliding along the bud cortex and consequently the movement of the mitotic spindle to the bud neck. In Meyerozyma guilliermondii (strain ATCC 6260 / CBS 566 / DSM 6381 / JCM 1539 / NBRC 10279 / NRRL Y-324) (Yeast), this protein is Nuclear distribution protein PAC1.